The primary structure comprises 516 residues: uncharacterized protein (516 aa).

It to H.influenzae HI_0521.

This is an uncharacterized protein from Escherichia coli (strain K12).